The primary structure comprises 1414 residues: MNQELTNNPFNPVAPLKTFDEIKVSLASPERILSWSFGEIKKPETINYRTFKPERDGLFCARIFGPIKDYECLCGKYKRMKYRGVVCEKCGVEVTLQKVRRERMGHIELASPVAHIWFLKSLPSRIGLMLDMTLRDLERVLYFENYVVIEPGLTELTYGQMMTEEEYMDAQDIYGMDAFTANIGAEAIREMLAAIDLEAEADQLRADLKEATGELKPKKIIKRLKVVESFLESGNRPEWMVLTVIPVIPPELRPLVPLDGGRFATSDLNDLYRRVINRNNRLKRLIELRAPDIIVRNEKRMLQESVDALFDNGRRGRVITGANKRPLKSLSDMLKGKQGRFRQNLLGKRVDFSGRSVIVTGPELKLHQCGLPKKMALELFKPFIYSRLEAKGLSSTVKQAKKLVEKERPEVWDILDEVIREHPVMLNRAPTLHRLGIQAFEPVLIEGKAIQLHPLVCSAFNADFDGDQMAVHVPLSLEAQLEARVLMMSTNNVLSPANGAPIIVPSQDMILGLYYTTLEREGMKGEGMVFGSVEEVQHALDAGMVHLHSKITARITQIDENGLEVMKRFDTTPGRIRLGALLPLNAKAPFDLVNRLLRKKEVQQIIDTVYRYCGQKESVIFCDQIMTMGFREAFKAGISFGKDDMLIPDTKWPIVGETRELVKDFEQQYMDGLITQGEKYNKVVDAWSKCNDKVTDAMMGSISASRKDADGSEMEPNSVYMMAHSGARGSVTQMKQLGGMRGLMAKPNGDIIETPIISNFKEGLTVLEYFNSTHGARKGLSDTALKTANSGYLTRRLVDVAQDCIVRMRDCGTESSITAVAAVNDGEVVSSLSERILGRVLAEDVVRPGTDEVLAAAGTLIDERMSDTIEEAGVASARIRSPLTCEAEEGVCAMCYGRDLARGTMVNTGEAVGIIAAQSIGEPGTQLTMRTFHIGGVAQGGQQSFLEASHSGKVVFDNAQTLENDAGEIMVMGRNMKLIIQDDNGEERASHKVGYGTKLFVTEGQKVARGDKLFEWDPYTLPIIAEKSGTAKFVDLVSGIAIKDETDDATGMTQKIVIDWRSATKGNELKPEIILVDADGEPVRNDAGNPVTYPMSVDAVLSIEDQAEVKAGDVVARIPREGAKTKDITGGLPRVAELFEARRPKDHAIIAEIDGYVRYGKDYKNKRRIAIESSEDPDHKVEYMVPKGKHIPVAEGDFVQKGDYIMDGNPAPHDILAIMGVEALADYMIDEVQDVYRLQGVKINDKHIEVIVRQMLQKWEIQESGDTTLLKGEHVDKQEFDQANAKALSKNGRPAKGEPILLGITKASLQTRSFISAASFQETTRVLTEASVQGKKDKLVGLKENVIVGRLIPAGTGGATMKVRRVAQDRDNVVIEARREEAEAAAALAAPVADDMVGGDVFDQPVHHEEESRD.

Zn(2+) contacts are provided by C72, C74, C87, and C90. Residues D463, D465, and D467 each contribute to the Mg(2+) site. Zn(2+) contacts are provided by C811, C885, C892, and C895.

The protein belongs to the RNA polymerase beta' chain family. In terms of assembly, the RNAP catalytic core consists of 2 alpha, 1 beta, 1 beta' and 1 omega subunit. When a sigma factor is associated with the core the holoenzyme is formed, which can initiate transcription. Mg(2+) serves as cofactor. The cofactor is Zn(2+).

It catalyses the reaction RNA(n) + a ribonucleoside 5'-triphosphate = RNA(n+1) + diphosphate. Its function is as follows. DNA-dependent RNA polymerase catalyzes the transcription of DNA into RNA using the four ribonucleoside triphosphates as substrates. This chain is DNA-directed RNA polymerase subunit beta', found in Roseobacter denitrificans (strain ATCC 33942 / OCh 114) (Erythrobacter sp. (strain OCh 114)).